The chain runs to 288 residues: Formamidopyrimidine-DNA glycosylase (288 aa).

The active-site Schiff-base intermediate with DNA is Pro-2. Catalysis depends on Glu-3, which acts as the Proton donor. Lys-58 (proton donor; for beta-elimination activity) is an active-site residue. DNA is bound by residues His-101, Arg-124, and Arg-169. Residues 254-288 (LVYDRAGLPCRVCGTPIRQIVQGQRSTFYCPACQR) form an FPG-type zinc finger. Arg-278 functions as the Proton donor; for delta-elimination activity in the catalytic mechanism.

The protein belongs to the FPG family. In terms of assembly, monomer. The cofactor is Zn(2+).

The enzyme catalyses Hydrolysis of DNA containing ring-opened 7-methylguanine residues, releasing 2,6-diamino-4-hydroxy-5-(N-methyl)formamidopyrimidine.. It catalyses the reaction 2'-deoxyribonucleotide-(2'-deoxyribose 5'-phosphate)-2'-deoxyribonucleotide-DNA = a 3'-end 2'-deoxyribonucleotide-(2,3-dehydro-2,3-deoxyribose 5'-phosphate)-DNA + a 5'-end 5'-phospho-2'-deoxyribonucleoside-DNA + H(+). Its function is as follows. Involved in base excision repair of DNA damaged by oxidation or by mutagenic agents. Acts as a DNA glycosylase that recognizes and removes damaged bases. Has a preference for oxidized purines, such as 7,8-dihydro-8-oxoguanine (8-oxoG). Has AP (apurinic/apyrimidinic) lyase activity and introduces nicks in the DNA strand. Cleaves the DNA backbone by beta-delta elimination to generate a single-strand break at the site of the removed base with both 3'- and 5'-phosphates. This chain is Formamidopyrimidine-DNA glycosylase, found in Ralstonia nicotianae (strain ATCC BAA-1114 / GMI1000) (Ralstonia solanacearum).